We begin with the raw amino-acid sequence, 307 residues long: Ornithine carbamoyltransferase (307 aa).

Residues 50 to 53, glutamine 77, arginine 101, and 128 to 131 contribute to the carbamoyl phosphate site; these read STRT and HPCQ. L-ornithine-binding positions include asparagine 160, aspartate 224, and 228–229; that span reads SM. Carbamoyl phosphate-binding positions include 264 to 265 and arginine 292; that span reads CL.

It belongs to the aspartate/ornithine carbamoyltransferase superfamily. OTCase family.

It is found in the cytoplasm. It carries out the reaction carbamoyl phosphate + L-ornithine = L-citrulline + phosphate + H(+). It functions in the pathway amino-acid biosynthesis; L-arginine biosynthesis; L-arginine from L-ornithine and carbamoyl phosphate: step 1/3. Functionally, reversibly catalyzes the transfer of the carbamoyl group from carbamoyl phosphate (CP) to the N(epsilon) atom of ornithine (ORN) to produce L-citrulline. This is Ornithine carbamoyltransferase from Clavibacter sepedonicus (Clavibacter michiganensis subsp. sepedonicus).